Consider the following 313-residue polypeptide: Aspartate carbamoyltransferase catalytic subunit (313 aa).

Carbamoyl phosphate-binding residues include Arg-58 and Thr-59. Position 86 (Lys-86) interacts with L-aspartate. Carbamoyl phosphate contacts are provided by Arg-108, His-136, and Gln-139. Residues Arg-169 and Arg-223 each coordinate L-aspartate. Residues Gly-264 and Pro-265 each coordinate carbamoyl phosphate.

Belongs to the aspartate/ornithine carbamoyltransferase superfamily. ATCase family. In terms of assembly, heterododecamer (2C3:3R2) of six catalytic PyrB chains organized as two trimers (C3), and six regulatory PyrI chains organized as three dimers (R2).

It carries out the reaction carbamoyl phosphate + L-aspartate = N-carbamoyl-L-aspartate + phosphate + H(+). It participates in pyrimidine metabolism; UMP biosynthesis via de novo pathway; (S)-dihydroorotate from bicarbonate: step 2/3. In terms of biological role, catalyzes the condensation of carbamoyl phosphate and aspartate to form carbamoyl aspartate and inorganic phosphate, the committed step in the de novo pyrimidine nucleotide biosynthesis pathway. The protein is Aspartate carbamoyltransferase catalytic subunit of Syntrophotalea carbinolica (strain DSM 2380 / NBRC 103641 / GraBd1) (Pelobacter carbinolicus).